The sequence spans 521 residues: Cell adhesion molecule CEACAM1 (521 aa).

The N-terminal stretch at 1–34 (MELASAHLHKGQVPWGGLLLTASLLASWSPATTA) is a signal peptide. Residues 35 to 142 (EVTIEAVPPQ…QATVRFHVHP (108 aa)) form the Ig-like V-type domain. The Extracellular portion of the chain corresponds to 35–428 (EVTIEAVPPQ…GGLSDGAIAG (394 aa)). The segment at 39–142 (EAVPPQVAED…QATVRFHVHP (104 aa)) is required for homophilic binding. 16 N-linked (GlcNAc...) asparagine glycosylation sites follow: Asn-71, Asn-89, Asn-104, Asn-148, Asn-152, Asn-199, Asn-206, Asn-210, Asn-226, Asn-258, Asn-290, Asn-294, Asn-304, Asn-317, Asn-333, and Asn-375. 3 Ig-like C2-type domains span residues 147-234 (PNIT…FSLN), 239-319 (PDTP…KNIT), and 323-411 (PVTQ…IKLD). Residues Cys-167 and Cys-217 are joined by a disulfide bond. Cys-261 and Cys-301 are joined by a disulfide. An intrachain disulfide couples Cys-346 to Cys-394. Residues 429 to 447 (IVIGVVAGVALIAGLAYFL) traverse the membrane as a helical segment. Residues 445–457 (YFLYSRKSGGGSD) are interaction with calmodulin. Residues 447–521 (LYSRKSGGGS…ETVYSEVKKK (75 aa)) are interaction with FLNA. The Cytoplasmic portion of the chain corresponds to 448-521 (YSRKSGGGSD…ETVYSEVKKK (74 aa)). The tract at residues 455–521 (GSDQRDLTEH…ETVYSEVKKK (67 aa)) is disordered. Over residues 457–466 (DQRDLTEHKP) the composition is skewed to basic and acidic residues. Over residues 467–481 (STSNHNLAPSDNSPN) the composition is skewed to polar residues. A required for interaction with PTPN11 and PTPN6 and for control of phosphorylation level region spans residues 484–521 (DDVAYTVLNFNSQQPNRPTSAPSSPRATETVYSEVKKK). Tyr-488 bears the Phosphotyrosine; by SRC, LCK, INSR and EGFR mark. A compositionally biased stretch (polar residues) spans 491 to 514 (LNFNSQQPNRPTSAPSSPRATETV). Ser-503 carries the post-translational modification Phosphoserine. A Phosphotyrosine; by INSR, SRC and LCK modification is found at Tyr-515. An essential for interaction with PTPN11 and PTPN6 region spans residues 515–518 (YSEV).

The protein belongs to the immunoglobulin superfamily. CEA family. As to quaternary structure, (Microbial infection) Interacts with MHV S1 spike glycoprotein. Monomer. Oligomer. Heterodimer. Homodimer. Cis-dimer/oligomer (via Ig-like C2-type and/or via cytoplasmic domains); induced by trans-homophilic cell adhesion through an allosteric mechanism transmitted by the Ig-like V-type domain, and is regulated by intracellular calcium and calmodulin. Interacts (via cytoplasmic domain) with calmodulin in a calcium dependent manner; reduces homophilic cell adhesion through dissociation of dimer. Isoform 1 interacts (via cytoplasmic domain) with PTPN11 (preferentially) and PTPN6; cis-homodimer form is preferred; this interaction is decreased by formation of isoform 1 / isoform 2 cis-heterodimers and is dependent on the monomer/dimer equilibrium; this interaction is phosphorylation-dependent. Isoform 1 interacts with LYN. Isoform 1 interacts (via cytoplasmic domain) with SRC (via SH2 domain); this interaction is regulated by trans-homophilic cell adhesion. Isoform 1 interacts with LCK; mediates phosphorylation at Tyr-488 and Tyr-515 resulting in PTPN6 association. Isoform 1 interacts with PTPN6; this interaction is phosphorylation-dependent and causes a profound decrease in TCR stimulation-induced CD247 and ZAP70 phosphorylation. Isoform 1 interacts with TCR/CD3 complex through TCR beta chain and CD3E; colocalizes at the cell surface and upon stimulation of the TCR/CD3 complex recruits PTPN6 in the TCR/CD3 complex, resulting in dephosphorylation of CD247 and ZAP70. Isoform 1 interacts (via cytoplasmic domain) with SHC1 (via SH2 domain); SHC1 mediates interaction with INSR or EGFR in a Ser-503 phosphorylation-dependent manner. Isoform 1 interacts with EGFR; the interaction is indirect. Isoform 1 interacts with CSF3R; down-regulates the CSF3R-STAT3 pathway through recruitment of PTPN6 that dephosphorylates CSF3R. Isoform 1 (phosphorylated form) interacts with TLR4 and SYK; recruits PTPN6 that dephosphorylates SYK, reducing the production of reactive oxygen species (ROS) and lysosome disruption, leading to a reduction of the inflammasome activity. Isoform 1 interacts with FLNA; inhibits cell migration and cell scattering by interfering with the interaction of FLNA with RALA. Isoform 1 interacts (via cytoplasmic domain) with PXN; the interaction is phosphotyrosyl-dependent. Isoform 1 interacts with KLRK1; recruits PTPN6 that dephosphorylates VAV1. Isoform 1 interacts with CEACAM8. Isoform 1 interacts with FASN; this interaction is insulin and phosphorylation-dependent; reduces fatty-acid synthase activity. Interacts (via Ig-like V-type) with HAVCR2 (via Ig-like V-type); facilitates the maturation and cell surface expression of HAVCR2 thereby regulating T-cell tolerance induction. Isoform 2 interacts (via the cytoplasmic domain) with ANXA2; this interaction is regulated by phosphorylation and appears in the AIIt complex. Interacts (via Lewis X moieties) with CD209 (via C-type lectin domain); this interaction is regulated by the glycosylation pattern of CEACAM1 on cell types and regulates contact between dendritic cells and neutrophils. Phosphorylated on serine and tyrosine. Isoform 1 is phosphorylated on tyrosine by Src family kinases like SRC and LCK and by receptor like CSF3R, EGFR and INSR upon stimulation. Phosphorylated at Ser-503; mediates activity. Phosphorylated at Tyr-488; regulates activity. Phosphorylated at Tyr-488 by EGFR and INSR upon stimulation; this phosphorylation is Ser-503-phosphorylation-dependent; mediates cellular internalization; increases interaction with FASN. Phosphorylated at Tyr-488 and Tyr-515 by LCK; mediates PTPN6 association and is regulated by homophilic ligation of CEACAM1 in the absence of T-cell activation. Phosphorylated at Tyr-515; mediates interaction with PTPN11. In terms of processing, phosphorylated on serine and threonine. Expressed in granulocytes, lymphocytes, granulocytes, B cells, and T-cells. Expressed in bone. Highly expressed in liver and femur. Highly expressed in neutrophils, and to a lesser extent inmonocytes, and macrophages. Slightly higher expressed in peripheral blood neutrophils (PBNs). Intestinal T-cells predominantly express isoform 2 while extraintestinal T-cells mainly express isoform 1. Expressed in small intestine and colon.

It is found in the cell membrane. The protein localises to the lateral cell membrane. It localises to the apical cell membrane. Its subcellular location is the basal cell membrane. The protein resides in the cell junction. It is found in the adherens junction. The protein localises to the cytoplasmic vesicle. It localises to the secretory vesicle. Its subcellular location is the cell projection. The protein resides in the microvillus membrane. Functionally, cell adhesion protein that mediates homophilic cell adhesion in a calcium-independent manner. Plays a role as coinhibitory receptor in immune response, insulin action and also functions as an activator during angiogenesis. Its coinhibitory receptor function is phosphorylation- and PTPN6 -dependent, which in turn, suppress signal transduction of associated receptors by dephosphorylation of their downstream effectors. Plays a role in immune response, of T-cells, natural killer (NK) and neutrophils. Upon TCR/CD3 complex stimulation, inhibits TCR-mediated cytotoxicity by blocking granule exocytosis by mediating homophilic binding to adjacent cells, allowing interaction with and phosphorylation by LCK and interaction with the TCR/CD3 complex which recruits PTPN6 resulting in dephosphorylation of CD247 and ZAP70. Also inhibits T-cell proliferation and cytokine production through inhibition of JNK cascade and plays a crucial role in regulating autoimmunity and anti-tumor immunity by inhibiting T-cell through its interaction with HAVCR2. Upon natural killer (NK) cells activation, inhibit KLRK1-mediated cytolysis of CEACAM1-bearing tumor cells by trans-homophilic interactions with CEACAM1 on the target cell and lead to cis-interaction between CEACAM1 and KLRK1, allowing PTPN6 recruitment and then VAV1 dephosphorylation. Upon neutrophils activation negatively regulates IL1B production by recruiting PTPN6 to a SYK-TLR4-CEACAM1 complex, that dephosphorylates SYK, reducing the production of reactive oxygen species (ROS) and lysosome disruption, which in turn, reduces the activity of the inflammasome. Down-regulates neutrophil production by acting as a coinhibitory receptor for CSF3R by downregulating the CSF3R-STAT3 pathway through recruitment of PTPN6 that dephosphorylates CSF3R. Also regulates insulin action by promoting INS clearance and regulating lipogenesis in liver through regulating insulin signaling. Upon INS stimulation, undergoes phosphorylation by INSR leading to INS clearance by increasing receptor-mediated insulin endocytosis. This inernalization promotes interaction with FASN leading to receptor-mediated insulin degradation and to reduction of FASN activity leading to negative regulation of fatty acid synthesis. INSR-mediated phosphorylation also provokes a down-regulation of cell proliferation through SHC1 interaction resulting in decrease coupling of SHC1 to the MAPK3/ERK1-MAPK1/ERK2 and phosphatidylinositol 3-kinase pathways. Functions as activator in angiogenesis by promoting blood vessel remodeling through endothelial cell differentiation and migration and in arteriogenesis by increasing the number of collateral arteries and collateral vessel calibers after ischemia. Also regulates vascular permeability through the VEGFR2 signaling pathway resulting in control of nitric oxide production. Down-regulates cell growth in response to EGF through its interaction with SHC1 that mediates interaction with EGFR resulting in decrease coupling of SHC1 to the MAPK3/ERK1-MAPK1/ERK2 pathway. Negatively regulates platelet aggregation by decreasing platelet adhesion on type I collagen through the GPVI-FcRgamma complex. Inhibits cell migration and cell scattering through interaction with FLNA; interferes with the interaction of FLNA with RALA. Mediates bile acid transport activity in a phosphorylation dependent manner. Negatively regulates osteoclastogenesis. In terms of biological role, cell adhesion protein that mediates homophilic cell adhesion in a calcium-independent manner. Promotes populations of T-cells regulating IgA production and secretion associated with control of the commensal microbiota and resistance to enteropathogens. Its function is as follows. (Microbial infection) In case of murine coronavirus (MHV) infection, serves as receptor for MHV S1 spike glycoprotein. This Mus musculus (Mouse) protein is Cell adhesion molecule CEACAM1.